Reading from the N-terminus, the 522-residue chain is Apolipoprotein N-acyltransferase (522 aa).

6 consecutive transmembrane segments (helical) span residues Y17–F37, T61–L81, F98–V118, V127–F147, I164–I184, and L197–S217. Residues A236–P483 enclose the CN hydrolase domain. Residue E276 is the Proton acceptor of the active site. K342 is an active-site residue. The active-site Nucleophile is the C394. Residues N495–I515 form a helical membrane-spanning segment.

Belongs to the CN hydrolase family. Apolipoprotein N-acyltransferase subfamily.

It is found in the cell inner membrane. It carries out the reaction N-terminal S-1,2-diacyl-sn-glyceryl-L-cysteinyl-[lipoprotein] + a glycerophospholipid = N-acyl-S-1,2-diacyl-sn-glyceryl-L-cysteinyl-[lipoprotein] + a 2-acyl-sn-glycero-3-phospholipid + H(+). Its pathway is protein modification; lipoprotein biosynthesis (N-acyl transfer). Its function is as follows. Catalyzes the phospholipid dependent N-acylation of the N-terminal cysteine of apolipoprotein, the last step in lipoprotein maturation. The polypeptide is Apolipoprotein N-acyltransferase (Haemophilus influenzae (strain ATCC 51907 / DSM 11121 / KW20 / Rd)).